The following is a 92-amino-acid chain: Small ribosomal subunit protein uS19 (92 aa).

It belongs to the universal ribosomal protein uS19 family.

Its function is as follows. Protein S19 forms a complex with S13 that binds strongly to the 16S ribosomal RNA. This chain is Small ribosomal subunit protein uS19, found in Macrococcus caseolyticus (strain JCSC5402) (Macrococcoides caseolyticum).